A 459-amino-acid chain; its full sequence is Bifunctional protein GlmU (459 aa).

Residues 1 to 230 (MSNRFAVILA…FDETLGVNDR (230 aa)) form a pyrophosphorylase region. Residues 9-12 (LAAG), Lys23, Gln73, and 78-79 (GT) contribute to the UDP-N-acetyl-alpha-D-glucosamine site. Residue Asp103 participates in Mg(2+) binding. UDP-N-acetyl-alpha-D-glucosamine contacts are provided by Gly140, Glu155, Asn170, and Asn228. A Mg(2+)-binding site is contributed by Asn228. The linker stretch occupies residues 231-251 (VALSQAEIIMKNRINRKNMVN). The tract at residues 252-459 (GVTIIDPSNT…VDQLLNKKKS (208 aa)) is N-acetyltransferase. UDP-N-acetyl-alpha-D-glucosamine is bound by residues Arg333 and Lys351. The active-site Proton acceptor is the His363. 2 residues coordinate UDP-N-acetyl-alpha-D-glucosamine: Tyr366 and Asn377. Acetyl-CoA is bound by residues 386–387 (NY), Ala423, and Arg440.

The protein in the N-terminal section; belongs to the N-acetylglucosamine-1-phosphate uridyltransferase family. In the C-terminal section; belongs to the transferase hexapeptide repeat family. Homotrimer. Mg(2+) serves as cofactor.

The protein resides in the cytoplasm. It catalyses the reaction alpha-D-glucosamine 1-phosphate + acetyl-CoA = N-acetyl-alpha-D-glucosamine 1-phosphate + CoA + H(+). The catalysed reaction is N-acetyl-alpha-D-glucosamine 1-phosphate + UTP + H(+) = UDP-N-acetyl-alpha-D-glucosamine + diphosphate. Its pathway is nucleotide-sugar biosynthesis; UDP-N-acetyl-alpha-D-glucosamine biosynthesis; N-acetyl-alpha-D-glucosamine 1-phosphate from alpha-D-glucosamine 6-phosphate (route II): step 2/2. The protein operates within nucleotide-sugar biosynthesis; UDP-N-acetyl-alpha-D-glucosamine biosynthesis; UDP-N-acetyl-alpha-D-glucosamine from N-acetyl-alpha-D-glucosamine 1-phosphate: step 1/1. It participates in bacterial outer membrane biogenesis; LPS lipid A biosynthesis. Functionally, catalyzes the last two sequential reactions in the de novo biosynthetic pathway for UDP-N-acetylglucosamine (UDP-GlcNAc). The C-terminal domain catalyzes the transfer of acetyl group from acetyl coenzyme A to glucosamine-1-phosphate (GlcN-1-P) to produce N-acetylglucosamine-1-phosphate (GlcNAc-1-P), which is converted into UDP-GlcNAc by the transfer of uridine 5-monophosphate (from uridine 5-triphosphate), a reaction catalyzed by the N-terminal domain. In Bacillus thuringiensis subsp. konkukian (strain 97-27), this protein is Bifunctional protein GlmU.